The following is a 347-amino-acid chain: Heat-inducible transcription repressor HrcA (347 aa).

It belongs to the HrcA family.

In terms of biological role, negative regulator of class I heat shock genes (grpE-dnaK-dnaJ and groELS operons). Prevents heat-shock induction of these operons. This is Heat-inducible transcription repressor HrcA from Mycobacterium sp. (strain JLS).